The sequence spans 417 residues: 3-isopropylmalate dehydratase large subunit (417 aa).

3 residues coordinate [4Fe-4S] cluster: Cys298, Cys358, and Cys361.

It belongs to the aconitase/IPM isomerase family. LeuC type 2 subfamily. In terms of assembly, heterodimer of LeuC and LeuD. [4Fe-4S] cluster serves as cofactor.

It catalyses the reaction (2R,3S)-3-isopropylmalate = (2S)-2-isopropylmalate. It participates in amino-acid biosynthesis; L-leucine biosynthesis; L-leucine from 3-methyl-2-oxobutanoate: step 2/4. Functionally, catalyzes the isomerization between 2-isopropylmalate and 3-isopropylmalate, via the formation of 2-isopropylmaleate. This Thermoanaerobacter pseudethanolicus (strain ATCC 33223 / 39E) (Clostridium thermohydrosulfuricum) protein is 3-isopropylmalate dehydratase large subunit.